A 2227-amino-acid polypeptide reads, in one-letter code: Genome polyprotein (2227 aa).

2 short sequence motifs ((L)YPX(n)L motif) span residues 167–171 and 200–205; these read YPHGL and YPVWEL. The segment at 766–836 is involved in P1-2A pentamerization; the sequence is MMSRIAAGDL…PRKKKGLFSQ (71 aa). Residues 1010–1030 traverse the membrane as a helical segment; it reads VTVEIINTVLCFVKSGILLYV. The segment at 1043 to 1070 is membrane-penetrating ability; sequence IGLLRVMNYVDIGCSVISCGKVFSKMLE. Positions 1127–1152 form a coiled coil; the sequence is KKKDILNILKDNQQKIEKAIEEADKF. The region spanning 1204-1366 is the SF3 helicase domain; it reads HQKLKNLGSI…SFSKNPHNDM (163 aa). 1230–1237 lines the ATP pocket; sequence GKRGGGKS. Residues 1462–1482 traverse the membrane as a helical segment; the sequence is WVAVGAAVGILGVLVGGWFVY. At Tyr-1499 the chain carries O-(5'-phospho-RNA)-tyrosine. The Peptidase C3 domain maps to 1514–1728; the sequence is DPVESQSTLE…VAKLVTQEMF (215 aa). Active-site for protease 3C activity residues include His-1563, Asp-1603, and Cys-1691. One can recognise a RdRp catalytic domain in the interval 1976-2097; the sequence is DVGLDLDFSA…VFSRDVQIDN (122 aa).

It belongs to the picornaviridae polyprotein family. Homodimer. Homomultimer; probably interacts with membranes in a multimeric form. Seems to assemble into amyloid-like fibers. As to quaternary structure, homodimer. Monomer. Interacts with protein 3CD. In terms of assembly, interacts with host ACBD3. Interacts with protein 3AB. As to quaternary structure, interacts with human MAVS. In terms of assembly, homodimer; disulfide-linked. Homopentamer. Homooligomer. As to quaternary structure, interacts with capsid protein VP2. Interacts with capsid protein VP3. In terms of assembly, interacts with capsid protein VP1. Interacts with capsid protein VP3. Interacts with capsid protein VP1. Interacts with capsid protein VP2. Specific enzymatic cleavages by viral protease in vivo yield a variety of precursors and mature proteins. Polyprotein processing intermediates are produced, such as P1-2A which is a functional precursor of the structural proteins, VP0 which is a VP4-VP2 precursor, VP1-2A precursor, 3ABC precursor which is a stable and catalytically active precursor of 3A, 3B and 3C proteins, 3AB and 3CD precursors. The assembly signal 2A is removed from VP1-2A by a host protease, possibly host Cathepsin L. This cleavage occurs over a region of 3 amino-acids probably generating VP1 proteins with heterogeneous C-termini. Post-translationally, during virion maturation, immature virions are rendered infectious following cleavage of VP0 into VP4 and VP2. This maturation seems to be an autocatalytic event triggered by the presence of RNA in the capsid and is followed by a conformational change of the particle. In terms of processing, the assembly signal 2A is removed from VP1-2A by a host protease, possibly host Cathepsin L in naked virions. This cleavage does not occur in enveloped virions. This cleavage occurs over a region of 3 amino-acids probably generating VP1 proteins with heterogeneous C-termini. VPg is uridylylated prior to priming replication into VPg-pUpU. Post-translationally, unlike other picornaviruses, does not seem to be myristoylated.

The protein resides in the virion. Its subcellular location is the host endosome. The protein localises to the host multivesicular body. It is found in the host membrane. It localises to the host mitochondrion outer membrane. The protein resides in the host cytoplasm. Its subcellular location is the host cytoplasmic vesicle membrane. The enzyme catalyses RNA(n) + a ribonucleoside 5'-triphosphate = RNA(n+1) + diphosphate. It carries out the reaction a ribonucleoside 5'-triphosphate + H2O = a ribonucleoside 5'-diphosphate + phosphate + H(+). It catalyses the reaction Selective cleavage of Gln-|-Gly bond in the poliovirus polyprotein. In other picornavirus reactions Glu may be substituted for Gln, and Ser or Thr for Gly.. In terms of biological role, capsid proteins VP1, VP2, and VP3 form a closed capsid enclosing the viral positive strand RNA genome. All these proteins contain a beta-sheet structure called beta-barrel jelly roll. Together they form an icosahedral capsid (T=3) composed of 60 copies of each VP1, VP2, and VP3, with a diameter of approximately 300 Angstroms. VP1 is situated at the 12 fivefold axes, whereas VP2 and VP3 are located at the quasi-sixfold axes. The naked capsid interacts with the host receptor HAVCR1 to provide virion attachment to and probably entry into the target cell. Its function is as follows. VP0 precursor is a component of the immature procapsids. Functionally, plays a role in the assembly of the 12 pentamers into an icosahedral structure. Has not been detected in mature virions, supposedly owing to its small size. Precursor component of immature procapsids that corresponds to an extended form of the structural protein VP1. After maturation, possibly by the host Cathepsin L, the assembly signal 2A is cleaved to give rise to the mature VP1 protein. In terms of biological role, functions as a viroporin. Affects membrane integrity and causes an increase in membrane permeability. Involved in host intracellular membrane rearrangements probably to give rise to the viral factories. Does not disrupt calcium homeostasis or glycoprotein trafficking. Antagonizes the innate immune response of the host by suppressing IFN-beta synthesis, which it achieves by interfering with the RIG-I/IFIH1 pathway. Its function is as follows. Affects membrane integrity and causes an increase in membrane permeability. Functionally, associates with and induces structural rearrangements of intracellular membranes. Displays RNA-binding activity. The precursor 3ABC is targeted to the mitochondrial membrane where protease 3C activity cleaves and inhibits the host antiviral protein MAVS, thereby disrupting activation of IRF3 through the IFIH1/MDA5 pathway. In vivo, the protease activity of 3ABC precursor is more efficient in cleaving the 2BC precursor than that of protein 3C. The 3ABC precursor may therefore play a role in the proteolytic processing of the polyprotein. Possible viroporin. In terms of biological role, interacts with the 3CD precursor and with RNA structures found at both the 5'- and 3'-termini of the viral genome. Since the 3AB precursor contains the hydrophobic domain 3A, it probably anchors the whole viral replicase complex to intracellular membranes on which viral RNA synthesis occurs. Its function is as follows. May serve as membrane anchor to the 3AB and 3ABC precursors via its hydrophobic domain. May interact with RNA. Functionally, acts as a primer for viral RNA replication and remains covalently bound to viral genomic RNA. VPg is uridylylated prior to priming replication into VPg-pUpU. The VPg-pUpU is then used as primer on the genomic RNA poly(A) by the RNA-dependent RNA polymerase to replicate the viral genome. Cysteine protease that generates mature viral proteins from the precursor polyprotein. In addition to its proteolytic activity, it binds to viral RNA, and thus influences viral genome replication. RNA and substrate bind cooperatively to the protease. Cleaves IKBKG/NEMO to impair innate immune signaling. Cleaves host PABPC1 which may participate in the switch of viral translation to RNA synthesis. In terms of biological role, interacts with the 3AB precursor and with RNA structures found at both the 5'- and 3'-termini of the viral genome. Disrupts TLR3 signaling by degrading the host adapter protein TICAM1/TRIF. Its function is as follows. Replicates genomic and antigenomic RNA by recognizing replications specific signals. This is Genome polyprotein from Cercopithecus hamlyni (Owl-faced monkey).